Consider the following 80-residue polypeptide: Defensin-like protein 291 (80 aa).

The first 29 residues, 1-29 (MAASKTTIFIVFVLCLSCTLLVNISGIQA), serve as a signal peptide directing secretion. Cystine bridges form between Cys-50–Cys-70, Cys-56–Cys-75, and Cys-62–Cys-77.

The protein belongs to the DEFL family.

Its subcellular location is the secreted. The polypeptide is Defensin-like protein 291 (Arabidopsis thaliana (Mouse-ear cress)).